The sequence spans 868 residues: Probable mixed-linked glucan synthase 3 (868 aa).

The interval Glu36 to Gly68 is disordered. Basic and acidic residues predominate over residues Ala53–Gly68. The next 2 helical transmembrane spans lie at Leu86–Gly106 and Ile116–Leu136. Asp211 is an active-site residue. Substrate contacts are provided by Asp412 and Asp414. The active site involves Asp573. 6 helical membrane passes run Ile649 to Ile669, Leu686 to Ile706, Phe717 to Leu737, Met771 to Gly791, Met810 to Met830, and Ile838 to Thr858.

This sequence belongs to the glycosyltransferase 2 family. Plant cellulose synthase-like F subfamily.

It is found in the golgi apparatus membrane. May catalyze both beta-1,3 and beta-1,4 glycosidic linkage on beta-D-glucan. Essential for (1,3;1,4)-beta-D-glucans synthesis in grasses and cereals (Poaceae). The mixed-linked glucans (which are not present in walls of dicotyledons or most other monocotyledonous plants) are particularly important constituents of the walls of the starchy endosperm and aleurone cells of cereal grains such as oats, wheat, rice and barley. They can account for up to 70% by weight of the wall. This chain is Probable mixed-linked glucan synthase 3 (CSLF3), found in Oryza sativa subsp. japonica (Rice).